Reading from the N-terminus, the 602-residue chain is NADH-quinone oxidoreductase subunit C/D (602 aa).

The segment at 1–192 (MVNNMTDLTA…DPFELTKAKQ (192 aa)) is NADH dehydrogenase I subunit C. An NADH dehydrogenase I subunit D region spans residues 216-602 (DFMFLNLGPN…IDFVMSDVDR (387 aa)).

The protein in the N-terminal section; belongs to the complex I 30 kDa subunit family. This sequence in the C-terminal section; belongs to the complex I 49 kDa subunit family. In terms of assembly, NDH-1 is composed of 13 different subunits. Subunits NuoB, CD, E, F, and G constitute the peripheral sector of the complex.

It localises to the cell inner membrane. It carries out the reaction a quinone + NADH + 5 H(+)(in) = a quinol + NAD(+) + 4 H(+)(out). NDH-1 shuttles electrons from NADH, via FMN and iron-sulfur (Fe-S) centers, to quinones in the respiratory chain. The immediate electron acceptor for the enzyme in this species is believed to be ubiquinone. Couples the redox reaction to proton translocation (for every two electrons transferred, four hydrogen ions are translocated across the cytoplasmic membrane), and thus conserves the redox energy in a proton gradient. The sequence is that of NADH-quinone oxidoreductase subunit C/D from Klebsiella pneumoniae (strain 342).